Reading from the N-terminus, the 320-residue chain is 4-hydroxyproline 2-epimerase (320 aa).

The Proton acceptor role is filled by cysteine 98. Residues 99-100 (GH), histidine 218, and aspartate 242 contribute to the substrate site. The active-site Proton donor is cysteine 246. Residue 247-248 (GT) coordinates substrate.

It belongs to the proline racemase family.

It carries out the reaction trans-4-hydroxy-L-proline = cis-4-hydroxy-D-proline. Catalyzes the epimerization of trans-4-hydroxy-L-proline (t4LHyp) to cis-4-hydroxy-D-proline (c4DHyp). Is likely involved in a degradation pathway that converts t4LHyp to alpha-ketoglutarate. Displays no proline racemase activity. This is 4-hydroxyproline 2-epimerase from Burkholderia pseudomallei (strain 1710b).